A 360-amino-acid polypeptide reads, in one-letter code: Ferrochelatase (360 aa).

Fe cation contacts are provided by His210 and Glu291.

The protein belongs to the ferrochelatase family.

The protein resides in the cytoplasm. The catalysed reaction is heme b + 2 H(+) = protoporphyrin IX + Fe(2+). The protein operates within porphyrin-containing compound metabolism; protoheme biosynthesis; protoheme from protoporphyrin-IX: step 1/1. Its function is as follows. Catalyzes the ferrous insertion into protoporphyrin IX. In Pseudoalteromonas atlantica (strain T6c / ATCC BAA-1087), this protein is Ferrochelatase.